The primary structure comprises 173 residues: uncharacterized protein (173 aa).

Belongs to the ycf73 family.

The protein localises to the plastid. Its subcellular location is the chloroplast. This is an uncharacterized protein from Saccharum hybrid (Sugarcane).